Here is a 375-residue protein sequence, read N- to C-terminus: Queuine tRNA-ribosyltransferase (375 aa).

Asp-94 (proton acceptor) is an active-site residue. Substrate-binding positions include 94 to 98 (DSGGF), Asp-148, Gln-191, and Gly-218. An RNA binding region spans residues 249–255 (GVGTPED). The active-site Nucleophile is Asp-268. The segment at 273–277 (TRIAR) is RNA binding; important for wobble base 34 recognition. Zn(2+) is bound by residues Cys-306, Cys-308, Cys-311, and His-337.

The protein belongs to the queuine tRNA-ribosyltransferase family. Homodimer. Within each dimer, one monomer is responsible for RNA recognition and catalysis, while the other monomer binds to the replacement base PreQ1. Zn(2+) serves as cofactor.

It carries out the reaction 7-aminomethyl-7-carbaguanine + guanosine(34) in tRNA = 7-aminomethyl-7-carbaguanosine(34) in tRNA + guanine. The protein operates within tRNA modification; tRNA-queuosine biosynthesis. Functionally, catalyzes the base-exchange of a guanine (G) residue with the queuine precursor 7-aminomethyl-7-deazaguanine (PreQ1) at position 34 (anticodon wobble position) in tRNAs with GU(N) anticodons (tRNA-Asp, -Asn, -His and -Tyr). Catalysis occurs through a double-displacement mechanism. The nucleophile active site attacks the C1' of nucleotide 34 to detach the guanine base from the RNA, forming a covalent enzyme-RNA intermediate. The proton acceptor active site deprotonates the incoming PreQ1, allowing a nucleophilic attack on the C1' of the ribose to form the product. After dissociation, two additional enzymatic reactions on the tRNA convert PreQ1 to queuine (Q), resulting in the hypermodified nucleoside queuosine (7-(((4,5-cis-dihydroxy-2-cyclopenten-1-yl)amino)methyl)-7-deazaguanosine). The protein is Queuine tRNA-ribosyltransferase of Caldanaerobacter subterraneus subsp. tengcongensis (strain DSM 15242 / JCM 11007 / NBRC 100824 / MB4) (Thermoanaerobacter tengcongensis).